The following is a 256-amino-acid chain: Hydroxypyruvate/pyruvate aldolase (256 aa).

Residue H48 is the Proton acceptor of the active site. Residues E152 and D178 each contribute to the a divalent metal cation site.

The protein belongs to the HpcH/HpaI aldolase family. A divalent metal cation serves as cofactor.

The catalysed reaction is D-glyceraldehyde + pyruvate = 2-dehydro-3-deoxy-L-galactonate. Aldolase which can catalyze in vitro the aldolisation reaction between hydroxypyruvate (HPA) or pyruvate (PA) and D-glyceraldehyde (D-GA). The condensation of pyruvate and D-glyceraldehyde produces 2-dehydro-3-deoxy-L-galactonate as the major product. Has weak activity with hydroxypyruvate and D-glyceraldehyde. This chain is Hydroxypyruvate/pyruvate aldolase, found in Roseobacter denitrificans (strain ATCC 33942 / OCh 114) (Erythrobacter sp. (strain OCh 114)).